A 143-amino-acid polypeptide reads, in one-letter code: Transcription antitermination protein NusB (143 aa).

This sequence belongs to the NusB family.

Functionally, involved in transcription antitermination. Required for transcription of ribosomal RNA (rRNA) genes. Binds specifically to the boxA antiterminator sequence of the ribosomal RNA (rrn) operons. In Mannheimia succiniciproducens (strain KCTC 0769BP / MBEL55E), this protein is Transcription antitermination protein NusB.